The chain runs to 319 residues: tRNA U34 carboxymethyltransferase (319 aa).

Residues Lys88, Trp102, Lys107, Gly126, 176–177 (LE), Met192, Tyr196, and Arg311 each bind carboxy-S-adenosyl-L-methionine.

This sequence belongs to the class I-like SAM-binding methyltransferase superfamily. CmoB family. In terms of assembly, homotetramer.

It catalyses the reaction carboxy-S-adenosyl-L-methionine + 5-hydroxyuridine(34) in tRNA = 5-carboxymethoxyuridine(34) in tRNA + S-adenosyl-L-homocysteine + H(+). Its function is as follows. Catalyzes carboxymethyl transfer from carboxy-S-adenosyl-L-methionine (Cx-SAM) to 5-hydroxyuridine (ho5U) to form 5-carboxymethoxyuridine (cmo5U) at position 34 in tRNAs. This is tRNA U34 carboxymethyltransferase from Pseudomonas syringae pv. syringae (strain B728a).